The chain runs to 1270 residues: Myosin-binding protein C, cardiac-type (1270 aa).

The residue at position 1 (M1) is an N-acetylmethionine. Residues 1–24 (MPEPGKKPVSAFNKKPRSAEVTAG) form a disordered region. Residues S47 and S72 each carry the phosphoserine modification. Positions 94 to 105 (VTEPAPPEKAES) are enriched in basic and acidic residues. The disordered stretch occupies residues 94 to 152 (VTEPAPPEKAESEVAPGAPEEVPAPATELEESVSSPEGSVSVTQDGSAAEHQGAPDDPI). Over residues 106–135 (EVAPGAPEEVPAPATELEESVSSPEGSVSV) the composition is skewed to low complexity. An Ig-like C2-type 1 domain is found at 151-254 (PIGLFLMRPQ…FDSCNFNLTV (104 aa)). Zn(2+) contacts are provided by Q206, H208, E221, and H223. Phosphoserine; by PKA and PKC is present on residues S273, S282, and S302. 2 positions are modified to phosphoserine: S307 and S423. 4 consecutive Ig-like C2-type domains span residues 358 to 448 (STAF…VKEP), 449 to 539 (PVLI…VQEK), 540 to 629 (KLEV…HFME), and 641 to 767 (PKIH…VIDV). C432 and C439 are oxidised to a cystine. S455 and S546 each carry phosphoserine. T603 is subject to Phosphothreonine. The segment at 683 to 702 (VTQGKKASAGPHPDAPEDAG) is disordered. Fibronectin type-III domains are found at residues 770–866 (APAA…IGPP) and 868–963 (EPTH…VQEI). In terms of domain architecture, Ig-like C2-type 6 spans 967 to 1061 (PRLQLPRHLR…ATLILQIVDK (95 aa)). Residues 1064 to 1159 (PPQDIRIVET…TKEPVFIPRP (96 aa)) enclose the Fibronectin type-III 3 domain. Positions 1177–1270 (PSFTQPLANR…ECRLEVRVPQ (94 aa)) constitute an Ig-like C2-type 7 domain. R1237 carries the omega-N-methylarginine modification.

Belongs to the immunoglobulin superfamily. MyBP family. Post-translationally, substrate for phosphorylation by PKA and PKC. Reversible phosphorylation appears to modulate contraction. In terms of processing, polyubiquitinated.

In terms of biological role, thick filament-associated protein located in the crossbridge region of vertebrate striated muscle a bands. In vitro it binds MHC, F-actin and native thin filaments, and modifies the activity of actin-activated myosin ATPase. It may modulate muscle contraction or may play a more structural role. This Mus musculus (Mouse) protein is Myosin-binding protein C, cardiac-type (Mybpc3).